A 416-amino-acid polypeptide reads, in one-letter code: Argininosuccinate synthase (416 aa).

Residues 19-27 (AYSGGLDTS) and alanine 46 contribute to the ATP site. L-citrulline is bound by residues tyrosine 97 and serine 102. Glycine 127 contacts ATP. L-aspartate-binding residues include threonine 129, asparagine 133, and aspartate 134. Residue asparagine 133 coordinates L-citrulline. Residues arginine 137, serine 188, serine 197, glutamate 273, and tyrosine 285 each contribute to the L-citrulline site.

This sequence belongs to the argininosuccinate synthase family. Type 1 subfamily. Homotetramer.

It is found in the cytoplasm. It carries out the reaction L-citrulline + L-aspartate + ATP = 2-(N(omega)-L-arginino)succinate + AMP + diphosphate + H(+). It functions in the pathway amino-acid biosynthesis; L-arginine biosynthesis; L-arginine from L-ornithine and carbamoyl phosphate: step 2/3. In Granulibacter bethesdensis (strain ATCC BAA-1260 / CGDNIH1), this protein is Argininosuccinate synthase.